A 383-amino-acid polypeptide reads, in one-letter code: Corticosteroid-binding globulin (383 aa).

Asn74 and Asn154 each carry an N-linked (GlcNAc...) asparagine glycan. A cortisol-binding site is contributed by Gln232. Asn238 carries N-linked (GlcNAc...) asparagine glycosylation. Gln264 contributes to the cortisol binding site. Residue Asn308 is glycosylated (N-linked (GlcNAc...) asparagine). Trp371 is a cortisol binding site.

Belongs to the serpin family. In terms of tissue distribution, produced and secreted by hepatocytes, but has also been identified in a number of glycocorticoid responsive cells (it is found in maternal lung, spleen, and ovary and fetal kidney).

The protein resides in the secreted. In terms of biological role, major transport protein for glucocorticoids and progestins in the blood of almost all vertebrate species. This is Corticosteroid-binding globulin (SERPINA6) from Oryctolagus cuniculus (Rabbit).